A 244-amino-acid chain; its full sequence is 1-(5-phosphoribosyl)-5-[(5-phosphoribosylamino)methylideneamino] imidazole-4-carboxamide isomerase (244 aa).

The active-site Proton acceptor is D8. The Proton donor role is filled by D129.

It belongs to the HisA/HisF family.

The protein localises to the cytoplasm. It catalyses the reaction 1-(5-phospho-beta-D-ribosyl)-5-[(5-phospho-beta-D-ribosylamino)methylideneamino]imidazole-4-carboxamide = 5-[(5-phospho-1-deoxy-D-ribulos-1-ylimino)methylamino]-1-(5-phospho-beta-D-ribosyl)imidazole-4-carboxamide. The protein operates within amino-acid biosynthesis; L-histidine biosynthesis; L-histidine from 5-phospho-alpha-D-ribose 1-diphosphate: step 4/9. The protein is 1-(5-phosphoribosyl)-5-[(5-phosphoribosylamino)methylideneamino] imidazole-4-carboxamide isomerase of Geobacter sulfurreducens (strain ATCC 51573 / DSM 12127 / PCA).